The primary structure comprises 377 residues: 5-hydroxytryptamine receptor 1D (377 aa).

The interval 1–23 (MSPLNQSAEGLPQEASNRSLNAT) is disordered. Over 1–38 (MSPLNQSAEGLPQEASNRSLNATETSEAWDPRTLQALK) the chain is Extracellular. N-linked (GlcNAc...) asparagine glycans are attached at residues Asn-5, Asn-17, and Asn-21. Residues 39-64 (ISLAVVLSVITLATVLSNAFVLTTIL) form a helical membrane-spanning segment. Residues 65–75 (LTRKLHTPANY) are Cytoplasmic-facing. A helical membrane pass occupies residues 76–97 (LIGSLATTDLLVSILVMPISIA). Topologically, residues 98–109 (YTITHTWNFGQI) are extracellular. Residues 110–134 (LCDIWLSSDITCCTASILHLCVIAL) traverse the membrane as a helical segment. An intrachain disulfide couples Cys-111 to Cys-188. The serotonin site is built by Asp-118 and Cys-122. Residues 135–137 (DRY) carry the DRY motif; important for ligand-induced conformation changes motif. The Cytoplasmic portion of the chain corresponds to 135 to 154 (DRYWAITDALEYSKRRTAGH). The helical transmembrane segment at 155–176 (AATMIAIVWAISICISIPPLFW) threads the bilayer. Topologically, residues 177–194 (RQAKAQEEMSDCLVNTSQ) are extracellular. The helical transmembrane segment at 195–218 (ISYTIYSTCGAFYIPSVLLIILYG) threads the bilayer. Residues 219–300 (RIYRAARNRI…ISAARERKAT (82 aa)) are Cytoplasmic-facing. A helical transmembrane segment spans residues 301 to 326 (KILGIILGAFIICWLPFFVVSLVLPI). A serotonin-binding site is contributed by Ser-321. The Extracellular segment spans residues 327 to 335 (CRDSCWIHP). Residues 336 to 359 (ALFDFFTWLGYLNSLINPIIYTVF) form a helical membrane-spanning segment. An NPxxY motif; important for ligand-induced conformation changes and signaling motif is present at residues 352–356 (NPIIY). The Cytoplasmic segment spans residues 360–377 (NEEFRQAFQKIVPFRKAS).

This sequence belongs to the G-protein coupled receptor 1 family. Homodimer. Heterodimer with HTR1B. In terms of tissue distribution, detected in brain neocortex and caudate nucleus (at protein level).

Its subcellular location is the cell membrane. Its function is as follows. G-protein coupled receptor for 5-hydroxytryptamine (serotonin). Also functions as a receptor for ergot alkaloid derivatives, various anxiolytic and antidepressant drugs and other psychoactive substances. Ligand binding causes a conformation change that triggers signaling via guanine nucleotide-binding proteins (G proteins) and modulates the activity of downstream effectors, such as adenylate cyclase. HTR1D is coupled to G(i)/G(o) G alpha proteins and mediates inhibitory neurotransmission by inhibiting adenylate cyclase activity. Regulates the release of 5-hydroxytryptamine in the brain, and thereby affects neural activity. May also play a role in regulating the release of other neurotransmitters. May play a role in vasoconstriction. The protein is 5-hydroxytryptamine receptor 1D of Homo sapiens (Human).